Reading from the N-terminus, the 782-residue chain is Small RNA degrading nuclease 3 (782 aa).

The Exonuclease domain maps to 145–296 (MLSIDCEMVT…HDAAAAMKLV (152 aa)). Positions 331-410 (AQLFLHKIPH…KKAVLKLSSG (80 aa)) constitute an RRM 1 domain. The interval 426–464 (PCEISTSERARAEENNVSSKRQKTEDETEETKEATVNQR) is disordered. The RRM 2 domain occupies 469 to 549 (TKLFLHKIPH…KMVVFKLSSG (81 aa)). The interval 563–605 (DSPGEISTTKRARTEESNMSSKRQKTEDESEETKEANAKQREA) is disordered. The stretch at 577–605 (EESNMSSKRQKTEDESEETKEANAKQREA) forms a coiled coil. Basic and acidic residues predominate over residues 595 to 605 (TKEANAKQREA). Residues 608 to 688 (TKLLLHKIPL…KMVAFKLSSG (81 aa)) enclose the RRM 3 domain. Positions 709-779 (ANANHCEDDH…KMKLEKKQSK (71 aa)) form a coiled coil.

This sequence belongs to the REXO1/REXO3 family. Associated with the Mediator complex.

Its subcellular location is the nucleus. Functionally, 3'-5' exonuclease degrading single-stranded small RNAs. This chain is Small RNA degrading nuclease 3 (SDN3), found in Arabidopsis thaliana (Mouse-ear cress).